Consider the following 428-residue polypeptide: Phosphomethylpyrimidine synthase 1 (428 aa).

Substrate contacts are provided by residues Asn65, Met94, Tyr123, His158, 180–182 (SRG), 221–224 (DGMR), and Glu260. Residue His264 participates in Zn(2+) binding. Tyr287 is a substrate binding site. His328 is a binding site for Zn(2+). The [4Fe-4S] cluster site is built by Cys405, Cys408, and Cys412.

Belongs to the ThiC family. Requires [4Fe-4S] cluster as cofactor.

It catalyses the reaction 5-amino-1-(5-phospho-beta-D-ribosyl)imidazole + S-adenosyl-L-methionine = 4-amino-2-methyl-5-(phosphooxymethyl)pyrimidine + CO + 5'-deoxyadenosine + formate + L-methionine + 3 H(+). The protein operates within cofactor biosynthesis; thiamine diphosphate biosynthesis. In terms of biological role, catalyzes the synthesis of the hydroxymethylpyrimidine phosphate (HMP-P) moiety of thiamine from aminoimidazole ribotide (AIR) in a radical S-adenosyl-L-methionine (SAM)-dependent reaction. This is Phosphomethylpyrimidine synthase 1 from Methanosarcina mazei (strain ATCC BAA-159 / DSM 3647 / Goe1 / Go1 / JCM 11833 / OCM 88) (Methanosarcina frisia).